We begin with the raw amino-acid sequence, 431 residues long: UDP-N-acetylmuramoylalanine--D-glutamate ligase (431 aa).

Residue 111 to 117 participates in ATP binding; the sequence is GTDGKST.

It belongs to the MurCDEF family.

Its subcellular location is the cytoplasm. It catalyses the reaction UDP-N-acetyl-alpha-D-muramoyl-L-alanine + D-glutamate + ATP = UDP-N-acetyl-alpha-D-muramoyl-L-alanyl-D-glutamate + ADP + phosphate + H(+). The protein operates within cell wall biogenesis; peptidoglycan biosynthesis. Its function is as follows. Cell wall formation. Catalyzes the addition of glutamate to the nucleotide precursor UDP-N-acetylmuramoyl-L-alanine (UMA). The chain is UDP-N-acetylmuramoylalanine--D-glutamate ligase from Petrotoga mobilis (strain DSM 10674 / SJ95).